The following is a 202-amino-acid chain: MEKKFYELPELPYPYDALEPYISEEQLRIHHEKHHQAYVDGANGVLRKLDDARENGEEVDIKAALKELSFHVGGYVLHLFFWGNMGPADECGGEPDGRLAEYIEKDFGSFQRFKKEFSQAAVSAEGSGWAVLTYCQRTDRLFIMQVEKHNVNVIPHFRILMVLDVWEHAYYIDYRNVRPDYVEAFWNIVNWKEVEKRFDDLF.

The Fe cation site is built by H30, H78, D164, and H168.

This sequence belongs to the iron/manganese superoxide dismutase family. In terms of assembly, homotetramer. Requires Fe cation as cofactor.

It catalyses the reaction 2 superoxide + 2 H(+) = H2O2 + O2. Its function is as follows. Destroys superoxide anion radicals which are normally produced within the cells and which are toxic to biological systems. This chain is Superoxide dismutase [Fe] (sod), found in Methanothermobacter marburgensis (strain ATCC BAA-927 / DSM 2133 / JCM 14651 / NBRC 100331 / OCM 82 / Marburg) (Methanobacterium thermoautotrophicum).